The sequence spans 248 residues: MAGHSKWANIKHKKAKEDAKRGKIFTKLIREITVAARLGGGDKDANPRLRAAIATALANNMSKDTIERAVVKGAGGDESANVEEVRYEGYGPGGVAIIVDCMTDNRNRTVGEVRHAFTKSGGNLGTDGSVAYMFTKRGIISFAPGVDEDALMEVALEAGVEDIITHEDGSIDVYTDPHDFSDIQEVLIEKGFNSENAEVTFDAETKAELDTETAEKVMALIDKLEDLDDVQSVYSNANFTQELIEQIG.

Belongs to the TACO1 family.

It localises to the cytoplasm. The protein is Probable transcriptional regulatory protein FTM_1203 of Francisella tularensis subsp. mediasiatica (strain FSC147).